Consider the following 202-residue polypeptide: Small ribosomal subunit protein bS20c (202 aa).

The transit peptide at 1–79 (MATIVQCLSS…KPMRQLIVCE (79 aa)) directs the protein to the chloroplast. Residues 89 to 110 (SAAKRARQAEKRRVYNKSKKSE) form a disordered region.

This sequence belongs to the bacterial ribosomal protein bS20 family. In terms of assembly, part of the 30S ribosomal subunit.

It is found in the plastid. It localises to the chloroplast. Binds directly to 16S ribosomal RNA. The protein is Small ribosomal subunit protein bS20c (RPS20) of Arabidopsis thaliana (Mouse-ear cress).